We begin with the raw amino-acid sequence, 86 residues long: Large ribosomal subunit protein bL27 (86 aa).

The tract at residues 1–22 (MATKKAGGSSRNGRDSAGRRLG) is disordered.

Belongs to the bacterial ribosomal protein bL27 family.

In Rickettsia rickettsii (strain Iowa), this protein is Large ribosomal subunit protein bL27.